Consider the following 239-residue polypeptide: Aspartate/glutamate leucyltransferase (239 aa).

This sequence belongs to the R-transferase family. Bpt subfamily.

It localises to the cytoplasm. It carries out the reaction N-terminal L-glutamyl-[protein] + L-leucyl-tRNA(Leu) = N-terminal L-leucyl-L-glutamyl-[protein] + tRNA(Leu) + H(+). The enzyme catalyses N-terminal L-aspartyl-[protein] + L-leucyl-tRNA(Leu) = N-terminal L-leucyl-L-aspartyl-[protein] + tRNA(Leu) + H(+). Functionally, functions in the N-end rule pathway of protein degradation where it conjugates Leu from its aminoacyl-tRNA to the N-termini of proteins containing an N-terminal aspartate or glutamate. The polypeptide is Aspartate/glutamate leucyltransferase (Campylobacter jejuni subsp. jejuni serotype O:2 (strain ATCC 700819 / NCTC 11168)).